The sequence spans 300 residues: tRNA pseudouridine synthase B (300 aa).

The active-site Nucleophile is the aspartate 44.

This sequence belongs to the pseudouridine synthase TruB family. Type 1 subfamily.

The catalysed reaction is uridine(55) in tRNA = pseudouridine(55) in tRNA. In terms of biological role, responsible for synthesis of pseudouridine from uracil-55 in the psi GC loop of transfer RNAs. In Corynebacterium diphtheriae (strain ATCC 700971 / NCTC 13129 / Biotype gravis), this protein is tRNA pseudouridine synthase B.